The following is a 236-amino-acid chain: Phosphoribosylaminoimidazole-succinocarboxamide synthase (236 aa).

This sequence belongs to the SAICAR synthetase family.

The catalysed reaction is 5-amino-1-(5-phospho-D-ribosyl)imidazole-4-carboxylate + L-aspartate + ATP = (2S)-2-[5-amino-1-(5-phospho-beta-D-ribosyl)imidazole-4-carboxamido]succinate + ADP + phosphate + 2 H(+). It functions in the pathway purine metabolism; IMP biosynthesis via de novo pathway; 5-amino-1-(5-phospho-D-ribosyl)imidazole-4-carboxamide from 5-amino-1-(5-phospho-D-ribosyl)imidazole-4-carboxylate: step 1/2. This Pelodictyon phaeoclathratiforme (strain DSM 5477 / BU-1) protein is Phosphoribosylaminoimidazole-succinocarboxamide synthase.